Here is a 295-residue protein sequence, read N- to C-terminus: Acetylglutamate kinase (295 aa).

Residues 66–67, arginine 88, and asparagine 193 each bind substrate; that span reads GG.

Belongs to the acetylglutamate kinase family. ArgB subfamily.

The protein resides in the cytoplasm. It catalyses the reaction N-acetyl-L-glutamate + ATP = N-acetyl-L-glutamyl 5-phosphate + ADP. Its pathway is amino-acid biosynthesis; L-arginine biosynthesis; N(2)-acetyl-L-ornithine from L-glutamate: step 2/4. Catalyzes the ATP-dependent phosphorylation of N-acetyl-L-glutamate. The chain is Acetylglutamate kinase from Rhizobium rhizogenes (strain K84 / ATCC BAA-868) (Agrobacterium radiobacter).